Here is a 605-residue protein sequence, read N- to C-terminus: MPSLKDWVVAGLVPMTIASSTSRLPSNCTNGPSSRRCWQDGFDIWSDYTDPKVAPPGKLVEYDLTVTQVTISPDGYERLGTVFNGQYPGPLIEADWGDTLRITVHNNLTNGNGTAVHWHGIRLFETNWIDGVPGVTQCPIPPGESQVYEFRATQYGTSWYHSHFSLQYSNGLYGPLVIHGPSSSDWDVDLGPWTLTDWYHEDAFTLNWISLAGQLAPIPVSTLLNGKGTYDCDPGLDPACTGKQEYFETTFQQGTKYKMAIVNTATLLTYTFWIDGHNFTVIEADFVPVEPYSTNVLNVGMGQRYEIVVEANADRTQGSSFWIHAHYCDIPDVIPNNKVGIIRYDESDTSEPATPPLSEQHRDFGCSDPSLGDLVPVVKKTVGPRVNQIGPHDYLTIGEQGKIPTPWEKDPRVHLWTIKNTAMYVDWQTPSLEKLTADHDEEFPPETVPVTLDFDTGEWVYFLLTSNYSLEDVVTPRNLTPSVHPIHLHGHDFAILAQGKGPFTPDIAPQLDNPPRRDVVDVDIGGYAWIAFEVDNPGAWLLHCHLQYHASEGMALQYIEQPSKIKPLIENAGVLNDFGNRCASWKRYYNAVDIPNDRPQDDSGI.

Positions 1 to 18 are cleaved as a signal peptide; that stretch reads MPSLKDWVVAGLVPMTIA. Asparagine 27, asparagine 107, and asparagine 112 each carry an N-linked (GlcNAc...) asparagine glycan. Plastocyanin-like domains follow at residues 65-183, 189-347, and 424-567; these read TVTQ…GPSS, DLGP…YDES, and YVDW…KIKP. Histidine 117, histidine 119, histidine 161, and histidine 163 together coordinate Cu cation. N-linked (GlcNAc...) asparagine glycans are attached at residues asparagine 278 and asparagine 467. Cu cation is bound by residues histidine 484, histidine 487, histidine 489, histidine 543, cysteine 544, histidine 545, and histidine 549.

Belongs to the multicopper oxidase family. The cofactor is Cu cation.

The catalysed reaction is 2 dihydrogeodin + O2 + 2 H(+) = 2 (+)-geodin + 2 H2O. It functions in the pathway secondary metabolite biosynthesis. Functionally, dihydrogeodin oxidase; part of the gene cluster that mediates the biosynthesis of geodin, an intermediate in the biosynthesis of other natural products. The pathway begins with the synthesis of atrochrysone thioester by the polyketide synthase (PKS) gedC. The atrochrysone carboxyl ACP thioesterase gedB then breaks the thioester bond and releases the atrochrysone carboxylic acid from gedC. The atrochrysone carboxylic acid is then converted to atrochrysone which is further transformed into emodinanthrone. The next step is performed by the emodinanthrone oxygenase gedH that catalyzes the oxidation of emodinanthrone to emodin. Emodin O-methyltransferase encoded probably by gedA then catalyzes methylation of the 8-hydroxy group of emodin to form questin. Ring cleavage of questin by questin oxidase gedK leads to desmethylsulochrin via several intermediates including questin epoxide. Another methylation step probably catalyzed by methyltransferase gedG leads to the formation of sulochrin which is further converted to dihydrogeodin by the sulochrin halogenase gedL. Finally, the dihydrogeodin oxidase gedJ catalyzes the stereospecific phenol oxidative coupling reaction converting dihydrogeodin to geodin. This chain is Dihydrogeodin oxidase, found in Aspergillus terreus (strain NIH 2624 / FGSC A1156).